A 568-amino-acid polypeptide reads, in one-letter code: Pyruvate carboxylase subunit B (568 aa).

In terms of domain architecture, Pyruvate carboxyltransferase spans 4-264; it reads IKVVETAFRD…DTGLDLEILK (261 aa). Substrate is bound by residues 12–16 and R83; that span reads RDAHQ. D13 serves as a coordination point for a divalent metal cation. A divalent metal cation is bound by residues K174, H203, and H205. N6-carboxylysine is present on K174. Residue T339 participates in substrate binding. The 76-residue stretch at 493–568 folds into the Biotinyl-binding domain; that stretch reads PEPVDVEGAV…ETGDIIMVIK (76 aa). K534 is subject to N6-biotinyllysine.

Heterooctamer of four A and four B subunits. Mg(2+) is required as a cofactor. Requires Mn(2+) as cofactor. Co(2+) serves as cofactor.

It carries out the reaction hydrogencarbonate + pyruvate + ATP = oxaloacetate + ADP + phosphate + H(+). With respect to regulation, inhibited by ADP and alpha-ketoglutarate. Its function is as follows. Pyruvate carboxylase catalyzes a 2-step reaction, involving the ATP-dependent carboxylation of the covalently attached biotin in the first step and the transfer of the carboxyl group to pyruvate in the second. In Methanothermobacter thermautotrophicus (strain ATCC 29096 / DSM 1053 / JCM 10044 / NBRC 100330 / Delta H) (Methanobacterium thermoautotrophicum), this protein is Pyruvate carboxylase subunit B (pycB).